A 61-amino-acid polypeptide reads, in one-letter code: Putative neurotoxin-D (61 aa).

A signal peptide spans 1–19 (MRTTVAILLVLFALSAILA). 3 disulfide bridges follow: C31–C51, C37–C56, and C39–C58.

As to expression, expressed by the venom gland.

It localises to the secreted. The polypeptide is Putative neurotoxin-D (Lychas mucronatus (Chinese swimming scorpion)).